Here is a 274-residue protein sequence, read N- to C-terminus: MASDSGNQGTLCTLEFAVQMTCQSCVDAVRKSLQGVAGVQDVEVHLEDQMVLVHTTLPSQEVQALLEGTGRQAVLKGMGSGQLQNLGAAVAILGGPGTVQGVVRFLQLTPERCLIEGTIDGLEPGLHGLHVHQYGDLTNNCNSCGNHFNPDGASHGGPQDSDRHRGDLGNVRADADGRAIFRMEDEQLKVWDVIGRSLIIDEGEDDLGRGGHPLSKITGNSGERLACGIIARSAGLFQNPKQICSCDGLTIWEERGRPIAGKGRKESAQPPAHL.

One can recognise an HMA domain in the interval 11–74; that stretch reads LCTLEFAVQM…LLEGTGRQAV (64 aa). 2 residues coordinate Cu cation: cysteine 22 and cysteine 25. Lysine 76 participates in a covalent cross-link: Glycyl lysine isopeptide (Lys-Gly) (interchain with G-Cter in ubiquitin). The superoxide dismutase-like stretch occupies residues 88–234; the sequence is AAVAILGGPG…LACGIIARSA (147 aa). A disulfide bond links cysteine 141 and cysteine 227. The Zn(2+) site is built by histidine 147, histidine 155, histidine 164, and aspartate 167. Glycyl lysine isopeptide (Lys-Gly) (interchain with G-Cter in ubiquitin) cross-links involve residues lysine 189, lysine 216, and lysine 241. Cu cation-binding residues include cysteine 244 and cysteine 246. Serine 267 is subject to Phosphoserine.

This sequence in the C-terminal section; belongs to the Cu-Zn superoxide dismutase family. In terms of assembly, homodimer, and heterodimer with SOD1. Interacts with COMMD1. Interacts with XIAP/BIRC4. Interacts with SLC31A1(via C-terminal domain); this interaction is Cu(1+)-mediated. The heterodimer CCS:SOD1 interacts with SLC31A1; this heterotrimer is Cu(1+)-mediated and its maintenance is regulated through SOD1 activation. Cu(2+) is required as a cofactor. Zn(2+) serves as cofactor. Ubiquitinion by XIAP/BIRC4 leads to enhancement of its chaperone activity toward its physiologic target, SOD1, rather than proteasomal degradation. XIAP/BIRC4 preferentially ubiquitinates at Lys-241. As to expression, ubiquitous.

The protein localises to the cytoplasm. Functionally, delivers copper to copper zinc superoxide dismutase (SOD1). The sequence is that of Copper chaperone for superoxide dismutase from Homo sapiens (Human).